A 935-amino-acid chain; its full sequence is uncharacterized protein (935 aa).

Disordered regions lie at residues 1–32 (MDIGLITNKEDDEENDLSIKSPYSTTKNQNNN), 74–228 (NNNN…YNNG), 265–287 (NNENKKKNNDNENNNYPNFNNNN), 342–376 (NQQKHQKKIQHQENSNFEQLEKPEQLSHNSESSKT), 394–414 (SPTQQQQQQQQQQQQQQQQQY), 466–491 (KNINNNNSNNNNNNNNNNNNNNNNNI), 516–559 (PHQQ…TSTI), 727–755 (SPSSSTSSETTTSTSTTTNNTSTTTISPS), and 778–799 (GGGSSGGGGSGGGVNNNNNVQN). The segment covering 74-227 (NNNNNTTNNN…NNNDDNIYNN (154 aa)) has biased composition (low complexity). A coiled-coil region spans residues 262–331 (KKNNNENKKK…NNINNNNNKI (70 aa)). Basic and acidic residues predominate over residues 265–274 (NNENKKKNND). Residues 275 to 287 (NENNNYPNFNNNN) are compositionally biased toward low complexity. Residues 367-376 (LSHNSESSKT) show a composition bias toward polar residues. Low complexity predominate over residues 397–414 (QQQQQQQQQQQQQQQQQY). A compositionally biased stretch (low complexity) spans 522–559 (SSPTSSSTSTSSTTSSSSSSSSSSSSSSSSSTSSTSTI). Positions 778–791 (GGGSSGGGGSGGGV) are enriched in gly residues.

This is an uncharacterized protein from Dictyostelium discoideum (Social amoeba).